A 909-amino-acid chain; its full sequence is GTPase activating protein homolog 4 (909 aa).

In terms of domain architecture, F-BAR spans 1-257; the sequence is MASLIGSAKL…PTPDFQFESC (257 aa). A Rho-GAP domain is found at 322 to 513; sequence IPIEEIMFKQ…LIIEGYLKLS (192 aa). Residues 529-909 are disordered; it reads IPSFSNNNNN…QRVPPPPSQS (381 aa). Low complexity-rich tracts occupy residues 533–562 and 571–602; these read SNNN…ITTN and SSTT…TPQQ. Over residues 609–625 the composition is skewed to pro residues; sequence SYQPPQPPPTMAPPPLF. A compositionally biased stretch (polar residues) spans 651-674; that stretch reads QYTQSSSNLPPIQLGVTNSPSKPQ. Positions 672-809 form a coiled coil; that stretch reads KPQLSDKQKE…QQLQQQSNGS (138 aa). Basic and acidic residues predominate over residues 675–716; sequence LSDKQKEKEKEKEKEKEKEKEREKEKEKEKEKEKEKEKEKEK. Over residues 723 to 741 the composition is skewed to low complexity; that stretch reads SSSTSPNSSSLSISNFLSS. Over residues 742-765 the composition is skewed to basic and acidic residues; it reads NKDKDKEKDKEKEKEKEKEKDKEI. A compositionally biased stretch (polar residues) spans 767 to 785; sequence ATNSTPEKPVSNRMSLIFS. Composition is skewed to low complexity over residues 786-828 and 843-892; these read QQLQ…MSPS and SGTS…ELKS.

The protein resides in the cytoplasm. Its subcellular location is the contractile vacuole. Functionally, rho GTPase-activating protein involved in the signal transduction pathway. The sequence is that of GTPase activating protein homolog 4 (mgp4) from Dictyostelium discoideum (Social amoeba).